We begin with the raw amino-acid sequence, 267 residues long: 4-hydroxy-tetrahydrodipicolinate reductase (267 aa).

Residues 8–13 and Asp34 each bind NAD(+); that span reads GAAGRM. NADP(+) is bound at residue Arg35. Residues 98 to 100 and 122 to 125 each bind NAD(+); these read GTT and AANF. Catalysis depends on His155, which acts as the Proton donor/acceptor. His156 contributes to the (S)-2,3,4,5-tetrahydrodipicolinate binding site. Residue Lys159 is the Proton donor of the active site. Residue 165-166 coordinates (S)-2,3,4,5-tetrahydrodipicolinate; the sequence is GT.

The protein belongs to the DapB family.

It localises to the cytoplasm. The enzyme catalyses (S)-2,3,4,5-tetrahydrodipicolinate + NAD(+) + H2O = (2S,4S)-4-hydroxy-2,3,4,5-tetrahydrodipicolinate + NADH + H(+). The catalysed reaction is (S)-2,3,4,5-tetrahydrodipicolinate + NADP(+) + H2O = (2S,4S)-4-hydroxy-2,3,4,5-tetrahydrodipicolinate + NADPH + H(+). It functions in the pathway amino-acid biosynthesis; L-lysine biosynthesis via DAP pathway; (S)-tetrahydrodipicolinate from L-aspartate: step 4/4. Functionally, catalyzes the conversion of 4-hydroxy-tetrahydrodipicolinate (HTPA) to tetrahydrodipicolinate. The chain is 4-hydroxy-tetrahydrodipicolinate reductase from Pseudomonas entomophila (strain L48).